The primary structure comprises 152 residues: D-aminoacyl-tRNA deacylase (152 aa).

The Gly-cisPro motif, important for rejection of L-amino acids signature appears at 142 to 143; that stretch reads GP.

Belongs to the DTD family. Homodimer.

Its subcellular location is the cytoplasm. The enzyme catalyses glycyl-tRNA(Ala) + H2O = tRNA(Ala) + glycine + H(+). It carries out the reaction a D-aminoacyl-tRNA + H2O = a tRNA + a D-alpha-amino acid + H(+). In terms of biological role, an aminoacyl-tRNA editing enzyme that deacylates mischarged D-aminoacyl-tRNAs. Also deacylates mischarged glycyl-tRNA(Ala), protecting cells against glycine mischarging by AlaRS. Acts via tRNA-based rather than protein-based catalysis; rejects L-amino acids rather than detecting D-amino acids in the active site. By recycling D-aminoacyl-tRNA to D-amino acids and free tRNA molecules, this enzyme counteracts the toxicity associated with the formation of D-aminoacyl-tRNA entities in vivo and helps enforce protein L-homochirality. The protein is D-aminoacyl-tRNA deacylase of Burkholderia cenocepacia (strain ATCC BAA-245 / DSM 16553 / LMG 16656 / NCTC 13227 / J2315 / CF5610) (Burkholderia cepacia (strain J2315)).